We begin with the raw amino-acid sequence, 331 residues long: DNA-directed RNA polymerase subunit alpha (331 aa).

The segment at 1 to 226 (MLIAQRPTLT…ELFGLARELN (226 aa)) is alpha N-terminal domain (alpha-NTD). An alpha C-terminal domain (alpha-CTD) region spans residues 243–331 (LSSELSMPIE…SYDEDETTTN (89 aa)).

This sequence belongs to the RNA polymerase alpha chain family. As to quaternary structure, homodimer. The RNAP catalytic core consists of 2 alpha, 1 beta, 1 beta' and 1 omega subunit. When a sigma factor is associated with the core the holoenzyme is formed, which can initiate transcription.

It catalyses the reaction RNA(n) + a ribonucleoside 5'-triphosphate = RNA(n+1) + diphosphate. DNA-dependent RNA polymerase catalyzes the transcription of DNA into RNA using the four ribonucleoside triphosphates as substrates. This is DNA-directed RNA polymerase subunit alpha from Clavibacter sepedonicus (Clavibacter michiganensis subsp. sepedonicus).